A 352-amino-acid polypeptide reads, in one-letter code: D-alanine--D-alanine ligase (352 aa).

Positions 133–342 constitute an ATP-grasp domain; it reads KTVFAAAGLP…FPKLVDRLIQ (210 aa). Residue 169–224 participates in ATP binding; it reads DETIGYPNFVKPANLGSSVGISKVRSRLELEAALDSAASFDRRIVVEAGVVAREVE. The Mg(2+) site is built by aspartate 295, glutamate 309, and asparagine 311.

It belongs to the D-alanine--D-alanine ligase family. Mg(2+) is required as a cofactor. The cofactor is Mn(2+).

The protein resides in the cytoplasm. The catalysed reaction is 2 D-alanine + ATP = D-alanyl-D-alanine + ADP + phosphate + H(+). The protein operates within cell wall biogenesis; peptidoglycan biosynthesis. Cell wall formation. This chain is D-alanine--D-alanine ligase, found in Acaryochloris marina (strain MBIC 11017).